A 375-amino-acid polypeptide reads, in one-letter code: MQCALYDAGRCRSCQWITQSVNEQLSAKTADLHRLLAGLPVEQWCAPIGGPEQHFRNKAKMVVSGSVEKPLFGMLHRDGTPVDLCGCPLYPASFAPVFSALKPFIARAGLTPYNVARKRGELKYLLLTESQFDGGMMLRFVLRSETKLTQLRAALPWLRAQLPQLRVITANIQPVHMAIMEGETEIYLTDQQALAERFNDVPLWIRPQSFFQTNPTVASRLYATARDWVGQLPVRHMWDLFCGVGGFGLHCATPQMQLTGIEIAPEAIACAKQSAAELGLTRLHFQALDSTQFATAQGETPDLVLVNPPRRGIGKPLCDYLAQMAPRFIIYSSCNAQTMAQDIRHLPNYRIQRVQLFDMFPHTAHYEVLALLRRL.

Positions 3, 11, 14, and 87 each coordinate [4Fe-4S] cluster. Glutamine 212, phenylalanine 241, glutamate 262, and asparagine 307 together coordinate S-adenosyl-L-methionine. Cysteine 334 acts as the Nucleophile in catalysis.

This sequence belongs to the class I-like SAM-binding methyltransferase superfamily. RNA M5U methyltransferase family. RlmC subfamily.

It carries out the reaction uridine(747) in 23S rRNA + S-adenosyl-L-methionine = 5-methyluridine(747) in 23S rRNA + S-adenosyl-L-homocysteine + H(+). In terms of biological role, catalyzes the formation of 5-methyl-uridine at position 747 (m5U747) in 23S rRNA. This Salmonella enteritidis PT4 (strain P125109) protein is 23S rRNA (uracil(747)-C(5))-methyltransferase RlmC.